A 337-amino-acid chain; its full sequence is Large ribosomal subunit protein uL3 (337 aa).

Positions 1–20 are disordered; that stretch reads MASIHRPKRGSLAFSPRKRA.

Belongs to the universal ribosomal protein uL3 family. In terms of assembly, part of the 50S ribosomal subunit. Forms a cluster with proteins L14 and L24e.

Functionally, one of the primary rRNA binding proteins, it binds directly near the 3'-end of the 23S rRNA, where it nucleates assembly of the 50S subunit. The sequence is that of Large ribosomal subunit protein uL3 from Methanosarcina barkeri (strain Fusaro / DSM 804).